The following is a 282-amino-acid chain: Probable endonuclease 4 (282 aa).

The Zn(2+) site is built by histidine 66, histidine 106, glutamate 143, aspartate 177, histidine 180, histidine 214, aspartate 227, histidine 229, and glutamate 259.

This sequence belongs to the AP endonuclease 2 family. The cofactor is Zn(2+).

The catalysed reaction is Endonucleolytic cleavage to 5'-phosphooligonucleotide end-products.. In terms of biological role, endonuclease IV plays a role in DNA repair. It cleaves phosphodiester bonds at apurinic or apyrimidinic (AP) sites, generating a 3'-hydroxyl group and a 5'-terminal sugar phosphate. The protein is Probable endonuclease 4 of Nitratidesulfovibrio vulgaris (strain DP4) (Desulfovibrio vulgaris).